A 521-amino-acid polypeptide reads, in one-letter code: Anaerobic nitric oxide reductase flavorubredoxin (521 aa).

Residues 30–210 (HKGTSYNSYL…PFSPLVTAKI (181 aa)) are zinc metallo-hydrolase. 6 residues coordinate Fe cation: His79, Glu81, Asp83, His147, Asp166, and His227. Residues 254–393 (ITLFYDSMSN…LCREHGRQLA (140 aa)) form the Flavodoxin-like domain. FMN is bound by residues 260–264 (SMSNN) and 342–369 (AFGSYGWTGGAVDRIQTRLMDAGFDISI). Positions 464 to 515 (DQPMLCTVCQWIYDPALGEPDQLVAPGTPWARVPDSFLCPGCGIGKEVFEPC) constitute a Rubredoxin-like domain. Residues Cys469, Cys472, Cys502, and Cys505 each contribute to the Fe cation site.

It in the N-terminal section; belongs to the zinc metallo-hydrolase group 3 family. In terms of assembly, homotetramer. Fe cation is required as a cofactor. It depends on FMN as a cofactor.

It localises to the cytoplasm. Its pathway is nitrogen metabolism; nitric oxide reduction. Anaerobic nitric oxide reductase; uses NADH to detoxify nitric oxide (NO), protecting several 4Fe-4S NO-sensitive enzymes. Has at least 2 reductase partners, only one of which (NorW, flavorubredoxin reductase) has been identified. NO probably binds to the di-iron center; electrons enter from the NorW at rubredoxin and are transferred sequentially to the FMN center and the di-iron center. Also able to function as an aerobic oxygen reductase. The protein is Anaerobic nitric oxide reductase flavorubredoxin of Aeromonas salmonicida (strain A449).